Consider the following 134-residue polypeptide: MRHYEIVFLVHPDQSEQVPAMVERYTNLITEDGGQVHRLEDWGRRQLAYPINKIHKAHYVLMNIECSDSVLSELNDTFRYNDAIIRNLVIRRKEAVTDVSPIKASEGREDRRSAPQREERNHDNSDEVSEESED.

The disordered stretch occupies residues 97 to 134; sequence TDVSPIKASEGREDRRSAPQREERNHDNSDEVSEESED. Positions 105 to 125 are enriched in basic and acidic residues; the sequence is SEGREDRRSAPQREERNHDNS.

It belongs to the bacterial ribosomal protein bS6 family.

Binds together with bS18 to 16S ribosomal RNA. This Marinomonas sp. (strain MWYL1) protein is Small ribosomal subunit protein bS6.